Reading from the N-terminus, the 4114-residue chain is Ferrichrome siderophore peptide synthetase (4114 aa).

4 consecutive Carrier domains span residues 797–874, 1947–2021, 3020–3093, and 3574–3650; these read DPAT…QSSG, TDSE…IDKL, TQSE…MQSS, and QALS…SQTN. Residues serine 835, serine 1982, serine 3054, and serine 3611 each carry the O-(pantetheine 4'-phosphoryl)serine modification. Residues 4040–4061 form a disordered region; the sequence is LDYSHHSQHSTHDRTPPSTPHV. Positions 4041 to 4054 are enriched in basic and acidic residues; it reads DYSHHSQHSTHDRT.

Belongs to the ATP-dependent AMP-binding enzyme family. Pantetheine 4'-phosphate is required as a cofactor.

It participates in siderophore biosynthesis; ferrichrome biosynthesis. In terms of biological role, multidomain peptide synthetase involved in ferrichrome biosynthesis. This Mycosarcoma maydis (Corn smut fungus) protein is Ferrichrome siderophore peptide synthetase (SID2).